The primary structure comprises 226 residues: Transmembrane 4 L6 family member 20 (226 aa).

The Lumenal segment spans residues Met1–Ser14. A helical membrane pass occupies residues Leu15–Val35. Residues Glu36–Glu49 lie on the Cytoplasmic side of the membrane. Residues Trp50–Leu70 form a helical membrane-spanning segment. Over Ala71–Gly83 the chain is Lumenal. A helical membrane pass occupies residues Met84–Val104. Topologically, residues Ser105–Ser191 are cytoplasmic. Residues Leu192 to Leu212 traverse the membrane as a helical segment. Topologically, residues Gly213 to Val226 are lumenal.

Belongs to the L6 tetraspanin family. Post-translationally, glycosylated at Asn-132, Asn-148 and Asn-163 in presence of ceramide which inverts the orientation of TM4SF20 in membranes exposing these residues to the endoplasmic reticulum lumen. In terms of processing, cleaved by signal peptidase at Ser-14 but the peptide does not act as a signal peptide. Cleavage is inhibited by ceramide which inverts the orientation of TM4SF20 in membranes exposing the N-terminus to the cytosol and not to the endoplasmic reticulum lumen.

It is found in the membrane. Its subcellular location is the endoplasmic reticulum membrane. Polytopic transmembrane protein. Inhibits regulated intramembrane proteolysis (RIP) of CREB3L1, inhibiting its activation and the induction of collagen synthesis. In response to ceramide, which alters TM4SF20 membrane topology, stimulates RIP activation of CREB3L1. Ceramide reverses the direction through which transmembrane helices are translocated into the endoplasmic reticulum membrane during translation of TM4SF20, this mechanism is called 'regulated alternative translocation' (RAT) and regulates the function of the transmembrane protein. This chain is Transmembrane 4 L6 family member 20 (Tm4sf20), found in Mus musculus (Mouse).